Reading from the N-terminus, the 208-residue chain is Phosphoheptose isomerase (208 aa).

The 163-residue stretch at 38 to 200 (MALTLARGRK…LFENVLALQP (163 aa)) folds into the SIS domain. 53 to 55 (NGG) provides a ligand contact to substrate. Zn(2+) contacts are provided by H62 and E66. Substrate contacts are provided by residues E66, 95-96 (ND), 121-123 (STS), S126, and Q173. Q173 and H181 together coordinate Zn(2+).

This sequence belongs to the SIS family. GmhA subfamily. Homotetramer. It depends on Zn(2+) as a cofactor.

It localises to the cytoplasm. The enzyme catalyses 2 D-sedoheptulose 7-phosphate = D-glycero-alpha-D-manno-heptose 7-phosphate + D-glycero-beta-D-manno-heptose 7-phosphate. It participates in carbohydrate biosynthesis; D-glycero-D-manno-heptose 7-phosphate biosynthesis; D-glycero-alpha-D-manno-heptose 7-phosphate and D-glycero-beta-D-manno-heptose 7-phosphate from sedoheptulose 7-phosphate: step 1/1. In terms of biological role, catalyzes the isomerization of sedoheptulose 7-phosphate in D-glycero-D-manno-heptose 7-phosphate. The chain is Phosphoheptose isomerase from Nitratidesulfovibrio vulgaris (strain DSM 19637 / Miyazaki F) (Desulfovibrio vulgaris).